Here is a 369-residue protein sequence, read N- to C-terminus: Probable methyltransferase TCM_000331 (369 aa).

S-adenosyl-L-homocysteine contacts are provided by Tyr-18, Cys-60, Asn-65, Asp-98, Leu-99, Ser-137, and Phe-138. Asn-176, Asp-261, Phe-263, and Asn-264 together coordinate Mg(2+).

This sequence belongs to the methyltransferase superfamily. Type-7 methyltransferase family. The cofactor is Mg(2+).

The polypeptide is Probable methyltransferase TCM_000331 (Theobroma cacao (Cacao)).